The primary structure comprises 122 residues: Large ribosomal subunit protein bL12 (122 aa).

This sequence belongs to the bacterial ribosomal protein bL12 family. Homodimer. Part of the ribosomal stalk of the 50S ribosomal subunit. Forms a multimeric L10(L12)X complex, where L10 forms an elongated spine to which 2 to 4 L12 dimers bind in a sequential fashion. Binds GTP-bound translation factors.

Forms part of the ribosomal stalk which helps the ribosome interact with GTP-bound translation factors. Is thus essential for accurate translation. The sequence is that of Large ribosomal subunit protein bL12 from Buchnera aphidicola subsp. Baizongia pistaciae (strain Bp).